Here is a 334-residue protein sequence, read N- to C-terminus: tRNA uridine(34) hydroxylase (334 aa).

One can recognise a Rhodanese domain in the interval 123–217; that stretch reads SDPDVILVDT…YLEEVKAEES (95 aa). Cys177 (cysteine persulfide intermediate) is an active-site residue.

It belongs to the TrhO family.

The catalysed reaction is uridine(34) in tRNA + AH2 + O2 = 5-hydroxyuridine(34) in tRNA + A + H2O. Its function is as follows. Catalyzes oxygen-dependent 5-hydroxyuridine (ho5U) modification at position 34 in tRNAs. The polypeptide is tRNA uridine(34) hydroxylase (Shewanella baltica (strain OS223)).